The chain runs to 124 residues: Heat-labile enterotoxin B chain (124 aa).

The signal sequence occupies residues 1–21; that stretch reads MNKVKCYVLFTALLSSLCAYG. Cysteine 30 and cysteine 107 are disulfide-bonded.

As to quaternary structure, heterohexamer of one A chain and of five B chains.

Its function is as follows. The biological activity of the toxin is produced by the A chain, which activates intracellular adenyl cyclase. This Escherichia coli O78:H11 (strain H10407 / ETEC) protein is Heat-labile enterotoxin B chain (eltB).